We begin with the raw amino-acid sequence, 723 residues long: 1,3-beta-galactosyl-N-acetylhexosamine phosphorylase Cphy0577 (723 aa).

Residue aspartate 317 is the Proton donor of the active site.

The protein belongs to the glycoside hydrolase 112 family.

The catalysed reaction is beta-D-galactosyl-(1-&gt;3)-N-acetyl-D-glucosamine + phosphate = alpha-D-galactose 1-phosphate + N-acetyl-D-glucosamine. In terms of biological role, reversibly phosphorolyzes beta-D-galactopyranosyl-(1-&gt;3)-N-acetyl-D-glucosamine to form alpha-D-galactopyranose 1-phosphate and acetyl-D-glucosamine. Active towards galacto-N-biose and lacto-N-biose. Does not phosphorolyze galacto-N-tetraose or lacto-N-tetraose. In the reverse reaction has activity toward N-acetyl-D-glucosamine and N-acetyl-D-galactosamine, but not L-rhamnose, D-glucose or D-galactose. In Lachnoclostridium phytofermentans (strain ATCC 700394 / DSM 18823 / ISDg) (Clostridium phytofermentans), this protein is 1,3-beta-galactosyl-N-acetylhexosamine phosphorylase Cphy0577.